The following is a 59-amino-acid chain: Potassium channel toxin alpha-KTx 16.2 (59 aa).

A signal peptide spans 1–22 (MKIFSILLVALIICSISICTEA). 3 disulfides stabilise this stretch: Cys30–Cys51, Cys36–Cys56, and Cys40–Cys58.

It belongs to the short scorpion toxin superfamily. Potassium channel inhibitor family. Alpha-KTx 16 subfamily. In terms of tissue distribution, expressed by the venom gland.

The protein resides in the secreted. In terms of biological role, alpha-KTx 16.2: inhibits large conductance calcium-activated potassium channels (KCa1.1/Slo-beta4 KCNMA1/KCNMB4). It appears to block channel activity by a simple bimolecular inhibition process. Shows a fast association rate and a slow dissociation rate of binding on rat brain synaptosome. Significantly inhibits voltage-dependent sodium current and voltage-dependent delayed rectifier potassium currents. Significantly inhibits voltage-dependent sodium current (Nav) and voltage-dependent delayed rectifier potassium current. The chain is Potassium channel toxin alpha-KTx 16.2 from Olivierus martensii (Manchurian scorpion).